Reading from the N-terminus, the 155-residue chain is Ribosomal RNA large subunit methyltransferase H (155 aa).

S-adenosyl-L-methionine is bound by residues Leu73, Gly104, and 123 to 128; that span reads LSPLTL.

It belongs to the RNA methyltransferase RlmH family. In terms of assembly, homodimer.

Its subcellular location is the cytoplasm. The catalysed reaction is pseudouridine(1915) in 23S rRNA + S-adenosyl-L-methionine = N(3)-methylpseudouridine(1915) in 23S rRNA + S-adenosyl-L-homocysteine + H(+). Its function is as follows. Specifically methylates the pseudouridine at position 1915 (m3Psi1915) in 23S rRNA. The sequence is that of Ribosomal RNA large subunit methyltransferase H from Azotobacter vinelandii (strain DJ / ATCC BAA-1303).